The following is an 86-amino-acid chain: Small ribosomal subunit protein bS16 (86 aa).

This sequence belongs to the bacterial ribosomal protein bS16 family.

The chain is Small ribosomal subunit protein bS16 from Mycoplasmoides gallisepticum (strain R(low / passage 15 / clone 2)) (Mycoplasma gallisepticum).